The following is a 1051-amino-acid chain: Ubiquitin-activating enzyme E1 2 (1051 aa).

Residues M1–G32 are compositionally biased toward basic and acidic residues. The tract at residues M1–E42 is disordered. 2 repeat units span residues G56–F194 and G453–I605. A 2 approximate repeats region spans residues G56–I605. Residues A472, D498, R509, K522, and D570–N571 contribute to the ATP site. The Glycyl thioester intermediate role is filled by C626.

Belongs to the ubiquitin-activating E1 family. In terms of assembly, monomer.

It carries out the reaction ATP + ubiquitin + [E1 ubiquitin-activating enzyme]-L-cysteine = AMP + diphosphate + S-ubiquitinyl-[E1 ubiquitin-activating enzyme]-L-cysteine.. Its pathway is protein modification; protein ubiquitination. Its function is as follows. Activates ubiquitin by first adenylating its C-terminal glycine residue with ATP, and thereafter linking this residue to the side chain of a cysteine residue in E1, yielding a ubiquitin-E1 thioester and free AMP. This chain is Ubiquitin-activating enzyme E1 2 (UBA2), found in Triticum aestivum (Wheat).